Here is a 242-residue protein sequence, read N- to C-terminus: Ubiquinone biosynthesis O-methyltransferase (242 aa).

S-adenosyl-L-methionine contacts are provided by R44, G64, D85, and M129.

It belongs to the methyltransferase superfamily. UbiG/COQ3 family.

It carries out the reaction a 3-demethylubiquinol + S-adenosyl-L-methionine = a ubiquinol + S-adenosyl-L-homocysteine + H(+). The catalysed reaction is a 3-(all-trans-polyprenyl)benzene-1,2-diol + S-adenosyl-L-methionine = a 2-methoxy-6-(all-trans-polyprenyl)phenol + S-adenosyl-L-homocysteine + H(+). The protein operates within cofactor biosynthesis; ubiquinone biosynthesis. O-methyltransferase that catalyzes the 2 O-methylation steps in the ubiquinone biosynthetic pathway. The protein is Ubiquinone biosynthesis O-methyltransferase of Yersinia enterocolitica serotype O:8 / biotype 1B (strain NCTC 13174 / 8081).